Reading from the N-terminus, the 359-residue chain is MTTTIQQRSGANGWQSFCEWVTSTNNRLYVGWFGVLMIPTLLAATTCFIVAFIAAPPVDIDGIREPVAGSLIYGNNIISGAVVPSSNAIGLHFYPIWEAASLDEWLYNGGPYQLVVFHFLIGIFCYMGREWELSYRLGMRPWICVAYSAPVAAASAVFLVYPFGQGSFSDGMPLGISGTFNFMLVFQAEHNILMHPFHMMGVAGVFGGSLFSAMHGSLVTSSLVRETTESESQNYGYKFGQEEETYNIVAAHGYFGRLIFQYASFNNSRSLHFFLAAWPVVGIWFTALGVSTMAFNLNGFNFNQSILDGQGRVLNTWADVLNRANLGMEVMHERNAHNFPLDLAAAESTPVALQAPAIG.

3 consecutive transmembrane segments (helical) span residues 29–46 (YVGWFGVLMIPTLLAATT), 118–133 (HFLIGIFCYMGREWEL), and 142–156 (WICVAYSAPVAAASA). Residue histidine 118 participates in chlorophyll a binding. Residue tyrosine 126 coordinates pheophytin a. [CaMn4O5] cluster is bound by residues aspartate 170 and glutamate 189. A helical transmembrane segment spans residues 197–218 (FHMMGVAGVFGGSLFSAMHGSL). Histidine 198 provides a ligand contact to chlorophyll a. A quinone is bound by residues histidine 215 and 264–265 (SF). Histidine 215 is a Fe cation binding site. Histidine 272 serves as a coordination point for Fe cation. Residues 274 to 288 (FLAAWPVVGIWFTAL) form a helical membrane-spanning segment. [CaMn4O5] cluster-binding residues include histidine 332, glutamate 333, aspartate 342, and alanine 344. A propeptide spanning residues 345–359 (AAESTPVALQAPAIG) is cleaved from the precursor.

This sequence belongs to the reaction center PufL/M/PsbA/D family. PSII is composed of 1 copy each of membrane proteins PsbA, PsbB, PsbC, PsbD, PsbE, PsbF, PsbH, PsbI, PsbJ, PsbK, PsbL, PsbM, PsbT, PsbX, PsbY, PsbZ, Psb30/Ycf12, peripheral proteins PsbO, CyanoQ (PsbQ), PsbU, PsbV and a large number of cofactors. It forms dimeric complexes. It depends on The D1/D2 heterodimer binds P680, chlorophylls that are the primary electron donor of PSII, and subsequent electron acceptors. It shares a non-heme iron and each subunit binds pheophytin, quinone, additional chlorophylls, carotenoids and lipids. D1 provides most of the ligands for the Mn4-Ca-O5 cluster of the oxygen-evolving complex (OEC). There is also a Cl(-1) ion associated with D1 and D2, which is required for oxygen evolution. The PSII complex binds additional chlorophylls, carotenoids and specific lipids. as a cofactor. In terms of processing, tyr-161 forms a radical intermediate that is referred to as redox-active TyrZ, YZ or Y-Z. Post-translationally, C-terminally processed by CtpA; processing is essential to allow assembly of the oxygen-evolving complex and thus photosynthetic growth.

The protein resides in the cellular thylakoid membrane. It carries out the reaction 2 a plastoquinone + 4 hnu + 2 H2O = 2 a plastoquinol + O2. Its function is as follows. Photosystem II (PSII) is a light-driven water:plastoquinone oxidoreductase that uses light energy to abstract electrons from H(2)O, generating O(2) and a proton gradient subsequently used for ATP formation. It consists of a core antenna complex that captures photons, and an electron transfer chain that converts photonic excitation into a charge separation. The D1/D2 (PsbA/PsbD) reaction center heterodimer binds P680, the primary electron donor of PSII as well as several subsequent electron acceptors. In Synechococcus sp. (strain WH7803), this protein is Photosystem II protein D1 1.